Reading from the N-terminus, the 406-residue chain is NAC transcription factor NAM-1 (406 aa).

Polar residues predominate over residues 1 to 11 (MGSPDSSSGSA). The tract at residues 1–40 (MGSPDSSSGSAQKPPRHQHQHQPPPPRRQGSAPELPPGFR) is disordered. Positions 35 to 204 (LPPGFRFHPT…DWVLCRIYKK (170 aa)) constitute an NAC domain. Residues 137–210 (VGVKKALVFY…IYKKTSKAAA (74 aa)) mediate DNA binding.

It localises to the nucleus. Its function is as follows. Transcription factor of the NAC family associated with the grain protein content (GPC). Accelerates senescence and increases nutrient remobilization from leaves to developing grains. Sequences of 11 European varieties of H.vulgare tested belongs to the same haplotype while the sequence found in H.spontaneum, an ancestor of the cultivated H.vulgare which has a higher GPC, belongs to an other haplotype. The sequence is that of NAC transcription factor NAM-1 (NAM-1) from Hordeum vulgare subsp. vulgare (Domesticated barley).